The sequence spans 361 residues: Protein-L-isoaspartate O-methyltransferase domain-containing protein 2 (361 aa).

A lipid anchor (N-myristoyl glycine) is attached at Gly2. Residue Ser64 is part of the active site. 3 adoMet binding motif regions span residues 85-94 (LNLGSGTGYL), 160-164 (YDRVY), and 181-191 (LKVGGILVMPL). The BC-box stretch occupies residues 240–250 (VRSLQDLARIA). The segment covering 303–312 (SNPSDDNSSG) has biased composition (polar residues). The interval 303 to 335 (SNPSDDNSSGDLEEERREEEATTPPDAKPEPPV) is disordered. A CUL-box region spans residues 345–348 (LPLP).

This sequence belongs to the methyltransferase superfamily. L-isoaspartyl/D-aspartyl protein methyltransferase family.

It is found in the cytoplasm. Its function is as follows. May act as a substrate recognition component of an ECS (Elongin BC-CUL5-SOCS-box protein) E3 ubiquitin ligase complex which mediates the ubiquitination and subsequent proteasomal degradation of target proteins. May bind to the methyltransferase cofactor S-adenosylmethionine (AdoMet) via the N-terminal AdoMet binding motif, but probably does not display methyltransferase activity. The sequence is that of Protein-L-isoaspartate O-methyltransferase domain-containing protein 2 (PCMTD2) from Bos taurus (Bovine).